We begin with the raw amino-acid sequence, 255 residues long: uncharacterized protein (255 aa).

2 consecutive transmembrane segments (helical) span residues 2–22 and 168–188; these read LLPA…YGVL and VASV…FNLF.

It is found in the cell membrane. This is an uncharacterized protein from Mycobacterium tuberculosis (strain ATCC 25618 / H37Rv).